The following is a 417-amino-acid chain: Serine hydroxymethyltransferase (417 aa).

Residues Leu-121 and 125–127 (GHL) contribute to the (6S)-5,6,7,8-tetrahydrofolate site. Lys-229 carries the N6-(pyridoxal phosphate)lysine modification. 355-357 (SPF) lines the (6S)-5,6,7,8-tetrahydrofolate pocket.

This sequence belongs to the SHMT family. As to quaternary structure, homodimer. Pyridoxal 5'-phosphate is required as a cofactor.

It localises to the cytoplasm. The catalysed reaction is (6R)-5,10-methylene-5,6,7,8-tetrahydrofolate + glycine + H2O = (6S)-5,6,7,8-tetrahydrofolate + L-serine. It functions in the pathway one-carbon metabolism; tetrahydrofolate interconversion. It participates in amino-acid biosynthesis; glycine biosynthesis; glycine from L-serine: step 1/1. Functionally, catalyzes the reversible interconversion of serine and glycine with tetrahydrofolate (THF) serving as the one-carbon carrier. This reaction serves as the major source of one-carbon groups required for the biosynthesis of purines, thymidylate, methionine, and other important biomolecules. Also exhibits THF-independent aldolase activity toward beta-hydroxyamino acids, producing glycine and aldehydes, via a retro-aldol mechanism. The chain is Serine hydroxymethyltransferase from Buchnera aphidicola subsp. Baizongia pistaciae (strain Bp).